Reading from the N-terminus, the 60-residue chain is Large ribosomal subunit protein bL33 (60 aa).

This sequence belongs to the bacterial ribosomal protein bL33 family.

The polypeptide is Large ribosomal subunit protein bL33 (Christiangramia forsetii (strain DSM 17595 / CGMCC 1.15422 / KT0803) (Gramella forsetii)).